The chain runs to 446 residues: tRNA modification GTPase MnmE (446 aa).

(6S)-5-formyl-5,6,7,8-tetrahydrofolate contacts are provided by Arg-23, Glu-81, and Lys-120. A TrmE-type G domain is found at 216–370 (GFKVAIIGKP…LIKELELILD (155 aa)). Residue Asn-226 coordinates K(+). GTP-binding positions include 226 to 231 (NVGKSS), 245 to 251 (SDIAGTT), and 270 to 273 (DTAG). A Mg(2+)-binding site is contributed by Ser-230. K(+) contacts are provided by Ser-245, Ile-247, and Thr-250. Thr-251 is a Mg(2+) binding site. Lys-446 provides a ligand contact to (6S)-5-formyl-5,6,7,8-tetrahydrofolate.

The protein belongs to the TRAFAC class TrmE-Era-EngA-EngB-Septin-like GTPase superfamily. TrmE GTPase family. Homodimer. Heterotetramer of two MnmE and two MnmG subunits. K(+) serves as cofactor.

It localises to the cytoplasm. Exhibits a very high intrinsic GTPase hydrolysis rate. Involved in the addition of a carboxymethylaminomethyl (cmnm) group at the wobble position (U34) of certain tRNAs, forming tRNA-cmnm(5)s(2)U34. The polypeptide is tRNA modification GTPase MnmE (Aliarcobacter butzleri (strain RM4018) (Arcobacter butzleri)).